Reading from the N-terminus, the 417-residue chain is XO lethal protein 1 (417 aa).

Residues 373 to 417 are disordered; the sequence is VSPGETSSEGISDEHHYEEYDEDDIMEEEEAPSARQDDTYDEDEE. Residues 391-403 show a composition bias toward acidic residues; that stretch reads EYDEDDIMEEEEA.

It belongs to the GHMP kinase family. Xol-1 subfamily.

It is found in the nucleus. Sex-determining factor that is required for sexual differentiation and X chromosome dosage compensation to promote male development. High expression during gastrulation triggers male development, while low expression at that time triggers hermaphrodite development. Although related to GHMP kinase, its mode of action remains unclear. The chain is XO lethal protein 1 from Caenorhabditis elegans.